Reading from the N-terminus, the 212-residue chain is ER lumen protein-retaining receptor 1 (212 aa).

Residues 1-4 lie on the Lumenal side of the membrane; the sequence is MNLF. Residues 5–24 form a helical membrane-spanning segment; that stretch reads RFLGDLSHLLAIILLLLKIW. Residues 25 to 32 are Cytoplasmic-facing; it reads KSRSCAGI. The chain crosses the membrane as a helical span at residues 33–52; the sequence is SGKSQVLFAVVFTARYLDLF. An interaction with the K-D-E-L motif on target proteins region spans residues 47–48; that stretch reads RY. Residues 53 to 58 lie on the Lumenal side of the membrane; that stretch reads TNYISL. The helical transmembrane segment at 59 to 79 threads the bilayer; it reads YNTCMKVVYIACSFTTVWMIY. Residues 80–92 are Cytoplasmic-facing; sequence SKFKATYDGNHDT. A helical membrane pass occupies residues 93-110; sequence FRVEFLVIPTAILAFLVN. Residues 111–116 are Lumenal-facing; the sequence is HDFTPL. A helical transmembrane segment spans residues 117–135; the sequence is EILWTFSIYLESVAILPQL. Over 136-149 the chain is Cytoplasmic; that stretch reads FMVSKTGEAETITS. A helical membrane pass occupies residues 150-168; that stretch reads HYLFALGVYRTLYLFNWIW. The segment at 159–169 is interaction with the K-D-E-L motif on target proteins; the sequence is RTLYLFNWIWR. At 169 to 178 the chain is on the lumenal side; sequence RYHFEGFFDL. A helical transmembrane segment spans residues 179–199; it reads IAIVAGLVQTVLYCDFFYLYI. The Cytoplasmic portion of the chain corresponds to 200 to 212; the sequence is TKVLKGKKLSLPA. An important for recycling of cargo proteins with the sequence motif K-D-E-L from the Golgi to the endoplasmic reticulum region spans residues 204–207; the sequence is KGKK. Serine 209 is modified (phosphoserine; by PKA).

The protein belongs to the ERD2 family. Upon ligand binding the receptor oligomerizes and interacts with components of the transport machinery such as ARFGAP1 and ARF1. In terms of processing, phosphorylation by PKA at Ser-209 is required for endoplasmic reticulum retention function.

The protein localises to the golgi apparatus membrane. Its subcellular location is the cytoplasmic vesicle. The protein resides in the COPI-coated vesicle membrane. It is found in the endoplasmic reticulum membrane. It localises to the endoplasmic reticulum-Golgi intermediate compartment membrane. In terms of biological role, receptor for the C-terminal sequence motif K-D-E-L that is present on endoplasmic reticulum resident proteins and that mediates their recycling from the Golgi back to the endoplasmic reticulum. The protein is ER lumen protein-retaining receptor 1 (KDELR1) of Bos taurus (Bovine).